The sequence spans 559 residues: Potassium-transporting ATPase potassium-binding subunit (559 aa).

Helical transmembrane passes span 6–26 (FLLI…LGNV), 63–83 (LLAI…MLML), 131–151 (VGLT…IFAL), 173–193 (ITLW…IQQG), 253–273 (FVQM…FGDV), 283–303 (LLWA…WAEW), 327–347 (FGIL…CGAV), 356–376 (ALGG…FGGV), 379–399 (GLYG…LMIG), 416–436 (LTAL…ALAL), 484–504 (LLAF…MAIA), and 524–544 (GALF…LTFI).

It belongs to the KdpA family. In terms of assembly, the system is composed of three essential subunits: KdpA, KdpB and KdpC.

It localises to the cell inner membrane. Its function is as follows. Part of the high-affinity ATP-driven potassium transport (or Kdp) system, which catalyzes the hydrolysis of ATP coupled with the electrogenic transport of potassium into the cytoplasm. This subunit binds the periplasmic potassium ions and delivers the ions to the membrane domain of KdpB through an intramembrane tunnel. In Enterobacter sp. (strain 638), this protein is Potassium-transporting ATPase potassium-binding subunit.